The chain runs to 533 residues: Probable protein kinase UbiB (533 aa).

Residues 24-44 (LILELPMLPWWLRLLGATLPW) traverse the membrane as a helical segment. The region spanning 126–494 (RFEREPLASA…WKGSRHDWLG (369 aa)) is the Protein kinase domain. ATP is bound by residues 132–140 (LASASVAQV) and lysine 154. Residue aspartate 289 is the Proton acceptor of the active site. A helical transmembrane segment spans residues 510-530 (LGQQLEAWPAWVMLAGGVFLI).

The protein belongs to the ABC1 family. UbiB subfamily.

The protein resides in the cell inner membrane. Its pathway is cofactor biosynthesis; ubiquinone biosynthesis [regulation]. Is probably a protein kinase regulator of UbiI activity which is involved in aerobic coenzyme Q (ubiquinone) biosynthesis. This Pseudomonas aeruginosa (strain UCBPP-PA14) protein is Probable protein kinase UbiB.